We begin with the raw amino-acid sequence, 155 residues long: MRCPYCGHLEDRVVDSRETQDGQATRRRRACLSCERRFTTYERIEDVLPQVVKKDGRREAFDRAKIVEGVATACQKRPVSTEQVEALVSAVERQVQELGEREIRTTVIGEAVMQRLRTLDEVAYVRFASVYRAFRDVGEFMTELAGLARKDGEER.

Residues 3–34 (CPYCGHLEDRVVDSRETQDGQATRRRRACLSC) fold into a zinc finger. In terms of domain architecture, ATP-cone spans 49–139 (PQVVKKDGRR…VYRAFRDVGE (91 aa)).

The protein belongs to the NrdR family. It depends on Zn(2+) as a cofactor.

Functionally, negatively regulates transcription of bacterial ribonucleotide reductase nrd genes and operons by binding to NrdR-boxes. The protein is Transcriptional repressor NrdR of Anaeromyxobacter sp. (strain K).